A 314-amino-acid chain; its full sequence is Hydroxyethylthiazole kinase (314 aa).

Methionine 70 is a substrate binding site. 2 residues coordinate ATP: arginine 145 and serine 217. Glycine 244 provides a ligand contact to substrate.

It belongs to the Thz kinase family. Mg(2+) is required as a cofactor.

The catalysed reaction is 5-(2-hydroxyethyl)-4-methylthiazole + ATP = 4-methyl-5-(2-phosphooxyethyl)-thiazole + ADP + H(+). Its pathway is cofactor biosynthesis; thiamine diphosphate biosynthesis; 4-methyl-5-(2-phosphoethyl)-thiazole from 5-(2-hydroxyethyl)-4-methylthiazole: step 1/1. Catalyzes the phosphorylation of the hydroxyl group of 4-methyl-5-beta-hydroxyethylthiazole (THZ). The polypeptide is Hydroxyethylthiazole kinase (Bifidobacterium longum (strain NCC 2705)).